The sequence spans 269 residues: E3 ubiquitin-protein ligase complex slx8-rfp subunit slx8 (269 aa).

Positions 1-10 are enriched in basic and acidic residues; that stretch reads MPPAHKRDTN. Disordered regions lie at residues 1-75 and 166-196; these read MPPA…LNRA and PRKQ…QVVP. A compositionally biased stretch (polar residues) spans 60 to 70; sequence PSGTTSENESL. The RING-type zinc-finger motif lies at 206 to 247; that stretch reads CVICLDSPENLSCTPCGHIFCNFCILSALGTTAATQKCPVCR.

In terms of assembly, part of an E3 ubiquitin complex including rfp1, rfp2 and slx8. Interacts with rfp1 and rfp2.

The protein localises to the nucleus. The catalysed reaction is S-ubiquitinyl-[E2 ubiquitin-conjugating enzyme]-L-cysteine + [acceptor protein]-L-lysine = [E2 ubiquitin-conjugating enzyme]-L-cysteine + N(6)-ubiquitinyl-[acceptor protein]-L-lysine.. The protein operates within protein modification; protein ubiquitination. Its function is as follows. Mediates ubiquitination and subsequent desumoylation/degradation of sumoylated proteins and proteins containing SUMO-like domains. Acts as a critical suppressor of gross chromosomal rearrangements (GCRs) during normal cell cycle progression. Involved in stabilizing, restarting or resolving transiently stalled replication forks. Prevents accumulation of DNA damage during cell cycle progression. In Schizosaccharomyces pombe (strain 972 / ATCC 24843) (Fission yeast), this protein is E3 ubiquitin-protein ligase complex slx8-rfp subunit slx8 (slx8).